The sequence spans 251 residues: MRKKVIAGNWKMNKTLEEGLSLASEVANMAKDEVPADVNLVMCIPYISLAAVSKVINDKVAIGAQNVYQKESGAFTGEISAPMLKSVGVKYVIIGHSERREYFGETNQQLADKVTISLANGLTPLFCCGETLAQREAGIHINFVNAQLTESLFHLSPEDFKKVVIAYEPIWAIGTGVTASDEQAQEMHAKIREHLASKYGAAVADEISILYGGSMKPDNAKGLLACKDIDGGLIGGASLKSRDFIDIAKSY.

9 to 11 (NWK) contributes to the substrate binding site. Histidine 96 acts as the Electrophile in catalysis. The Proton acceptor role is filled by glutamate 168. Substrate contacts are provided by residues glycine 174, serine 214, and 235–236 (GG).

The protein belongs to the triosephosphate isomerase family. In terms of assembly, homodimer.

Its subcellular location is the cytoplasm. It carries out the reaction D-glyceraldehyde 3-phosphate = dihydroxyacetone phosphate. It participates in carbohydrate biosynthesis; gluconeogenesis. Its pathway is carbohydrate degradation; glycolysis; D-glyceraldehyde 3-phosphate from glycerone phosphate: step 1/1. Functionally, involved in the gluconeogenesis. Catalyzes stereospecifically the conversion of dihydroxyacetone phosphate (DHAP) to D-glyceraldehyde-3-phosphate (G3P). The polypeptide is Triosephosphate isomerase (Cytophaga hutchinsonii (strain ATCC 33406 / DSM 1761 / CIP 103989 / NBRC 15051 / NCIMB 9469 / D465)).